We begin with the raw amino-acid sequence, 494 residues long: Poly(3-hydroxybutyrate) depolymerase (494 aa).

The N-terminal stretch at 1 to 25 is a signal peptide; that stretch reads MAFNFIRAAAAGAAMALCGVGSVHA. Catalysis depends on Ser-45, which acts as the Nucleophile. Catalysis depends on charge relay system residues Asp-132 and His-166. The Fibronectin type-III domain occupies 347–431; it reads APTGVSTSGA…AAASGTTLAA (85 aa).

Belongs to the AB hydrolase superfamily. Lipase family.

Its subcellular location is the secreted. The enzyme catalyses [(3R)-hydroxybutanoate](n) + H2O = [(3R)-hydroxybutanoate](n-2) + (3R)-hydroxybutanoate dimer + H(+). It carries out the reaction [(3R)-hydroxybutanoate](n) + H2O = [(3R)-hydroxybutanoate](n-1) + (R)-3-hydroxybutanoate + H(+). The catalysed reaction is (3R)-hydroxybutanoate dimer + H2O = 2 (R)-3-hydroxybutanoate + H(+). In terms of biological role, catalyzes the hydrolysis of poly(3-hydroxybutyrate) (PHB) film, producing the monomer and dimer of 3-hydroxybutyrate (3HB), while the 3HB trimer and tetramer are not formed. The chain is Poly(3-hydroxybutyrate) depolymerase from Delftia acidovorans (Pseudomonas acidovorans).